A 286-amino-acid polypeptide reads, in one-letter code: Phosphoribosylaminoimidazole-succinocarboxamide synthase (286 aa).

Belongs to the SAICAR synthetase family.

It catalyses the reaction 5-amino-1-(5-phospho-D-ribosyl)imidazole-4-carboxylate + L-aspartate + ATP = (2S)-2-[5-amino-1-(5-phospho-beta-D-ribosyl)imidazole-4-carboxamido]succinate + ADP + phosphate + 2 H(+). The protein operates within purine metabolism; IMP biosynthesis via de novo pathway; 5-amino-1-(5-phospho-D-ribosyl)imidazole-4-carboxamide from 5-amino-1-(5-phospho-D-ribosyl)imidazole-4-carboxylate: step 1/2. This Pasteurella multocida (strain Pm70) protein is Phosphoribosylaminoimidazole-succinocarboxamide synthase (purC).